A 623-amino-acid chain; its full sequence is MLLAQVNRDTQGMEFQSVDGDPQQVTLCLTEAVTVADDNIDGMDTVSLQAVTLVDGSTAYIQHSPKVSLTENKIMEGQVIQLEDGSAAYVQHLPMSKTGGEGLRLEDGQAVQLEDGTTAYIHAPKETYDQGGLQAVQLEDGTTAYIQHMPQSNTILAIQADGTVADLQTEGTIDAETISVLEQYSTKMEATECGTGLIGRGDSDGVHMQIVLQGQDCRSPRIQHVGEKAFRCEHEGCGKLYTTAHHLKVHERSHTGDKPYICDHLGCGKKFATGYGLKSHVRTHTGEKPYRCQELNCLKSFKTSGDLQKHTRTHTGEKPFKCPFEGCGRSFTTSNIRKVHIRTHTGERPYYCAEPNCGRAFASATNYKNHMRIHTGEKPYVCTVPGCDKRFTEYSSLYKHHVVHTPCKPYNCNHCGKTYKQISTLAMHKRTAHNDTEPIEEEQEGYFEPPAEAIDDPGLMYTPSVVDDDSGSEQVSGSEIMGQHHVALISQDGTQQVLSQADMQAMGGTITMVTQEGTTITIPAHEAMLSSGGAHSVTMVSADGTEGQVAIVTPDLAAYQTEEGELIQDQEQHEVSTSPHPVTLLATSNGTHIAVQLSDHPSLEEAIRIASRIQQGETPGMDD.

7 C2H2-type zinc fingers span residues 230–254, 260–284, 290–314, 320–344, 350–374, 380–404, and 410–433; these read FRCE…ERSH, YICD…VRTH, YRCQ…TRTH, FKCP…IRTH, YYCA…MRIH, YVCT…HVVH, and YNCN…RTAH.

This sequence belongs to the GLI C2H2-type zinc-finger protein family.

It is found in the nucleus. In terms of biological role, transcriptional activator. Activates the gene for selenocysteine tRNA (tRNAsec). Binds to the activator element (AE) motif of the selenocysteine tRNA gene promoter. The protein is Zinc finger protein 143 (znf143) of Danio rerio (Zebrafish).